The chain runs to 81 residues: Photosystem I iron-sulfur center (81 aa).

4Fe-4S ferredoxin-type domains lie at 2-31 (SHSV…MIPW) and 39-68 (IASA…VRVY). [4Fe-4S] cluster contacts are provided by Cys11, Cys14, Cys17, Cys21, Cys48, Cys51, Cys54, and Cys58.

In terms of assembly, the eukaryotic PSI reaction center is composed of at least 11 subunits. [4Fe-4S] cluster is required as a cofactor.

The protein localises to the plastid thylakoid membrane. It carries out the reaction reduced [plastocyanin] + hnu + oxidized [2Fe-2S]-[ferredoxin] = oxidized [plastocyanin] + reduced [2Fe-2S]-[ferredoxin]. Apoprotein for the two 4Fe-4S centers FA and FB of photosystem I (PSI); essential for photochemical activity. FB is the terminal electron acceptor of PSI, donating electrons to ferredoxin. The C-terminus interacts with PsaA/B/D and helps assemble the protein into the PSI complex. Required for binding of PsaD and PsaE to PSI. PSI is a plastocyanin-ferredoxin oxidoreductase, converting photonic excitation into a charge separation, which transfers an electron from the donor P700 chlorophyll pair to the spectroscopically characterized acceptors A0, A1, FX, FA and FB in turn. The protein is Photosystem I iron-sulfur center of Cuscuta gronovii (Common dodder).